The primary structure comprises 190 residues: Threonylcarbamoyl-AMP synthase (190 aa).

The YrdC-like domain maps to 7–190 (ADAISFIVDV…ALTGELFRQG (184 aa)).

This sequence belongs to the SUA5 family. TsaC subfamily.

The protein localises to the cytoplasm. It carries out the reaction L-threonine + hydrogencarbonate + ATP = L-threonylcarbamoyladenylate + diphosphate + H2O. Functionally, required for the formation of a threonylcarbamoyl group on adenosine at position 37 (t(6)A37) in tRNAs that read codons beginning with adenine. Catalyzes the conversion of L-threonine, HCO(3)(-)/CO(2) and ATP to give threonylcarbamoyl-AMP (TC-AMP) as the acyladenylate intermediate, with the release of diphosphate. In Cronobacter sakazakii (strain ATCC BAA-894) (Enterobacter sakazakii), this protein is Threonylcarbamoyl-AMP synthase.